Consider the following 233-residue polypeptide: tRNA (guanine-N(1)-)-methyltransferase (233 aa).

Residues Gly113 and 133–138 (VGDYVL) each bind S-adenosyl-L-methionine.

Belongs to the RNA methyltransferase TrmD family. As to quaternary structure, homodimer.

The protein resides in the cytoplasm. The enzyme catalyses guanosine(37) in tRNA + S-adenosyl-L-methionine = N(1)-methylguanosine(37) in tRNA + S-adenosyl-L-homocysteine + H(+). Specifically methylates guanosine-37 in various tRNAs. The polypeptide is tRNA (guanine-N(1)-)-methyltransferase (Rhizobium etli (strain ATCC 51251 / DSM 11541 / JCM 21823 / NBRC 15573 / CFN 42)).